The following is a 1127-amino-acid chain: Disease resistance protein RPS6 (1127 aa).

Met1 is subject to N-acetylmethionine. Positions 12-176 constitute a TIR domain; the sequence is WSYHVFPSFS…EIANDILGKM (165 aa). Residue Glu87 is part of the active site. An NB-ARC domain is found at 191 to 452; that stretch reads EDHITKMSSL…HIACIFNGEK (262 aa). 11 LRR repeats span residues 197 to 221, 540 to 563, 587 to 609, 610 to 632, 633 to 656, 658 to 679, 680 to 704, 766 to 790, 791 to 813, 814 to 834, and 835 to 857; these read MSSLLHLESEEVRMVGIWGPSGIGK, IDETDELHIHESSFKGMHNLLFLK, PSRLRLLRFDRYPSKCLPSNFHP, ENLVKLQMQQSKLEKLWDGVHSL, AGLRNMDLRGSRNLKEIPDLSMAT, LETLKLSSCSSLVELPSSIQYL, NKLNDLDMSYCDHLETIPSGVNLKS, SPTLTRLTFSNNPSFVEVPSSIQNL, YQLEHLEIMNCRNLVTLPTGINL, DSLISLDLSHCSQLKTFPDIS, and TNISDLNLSYTAIEEVPLSIEKL.

In terms of assembly, interacts with EDS1. In terms of tissue distribution, ubiquitous.

It catalyses the reaction NAD(+) + H2O = ADP-D-ribose + nicotinamide + H(+). Functionally, disease resistance (R) protein that specifically recognizes the hopA1 type III effector avirulence protein from Pseudomonas syringae. Resistance proteins guard the plant against pathogens that contain an appropriate avirulence protein via an indirect interaction with this avirulence protein. That triggers a defense system including the hypersensitive response, which restricts the pathogen growth. This chain is Disease resistance protein RPS6 (RPS6), found in Arabidopsis thaliana (Mouse-ear cress).